Reading from the N-terminus, the 134-residue chain is Holo-[acyl-carrier-protein] synthase (134 aa).

Aspartate 8 and glutamate 59 together coordinate Mg(2+).

The protein belongs to the P-Pant transferase superfamily. AcpS family. Mg(2+) is required as a cofactor.

The protein localises to the cytoplasm. The catalysed reaction is apo-[ACP] + CoA = holo-[ACP] + adenosine 3',5'-bisphosphate + H(+). Functionally, transfers the 4'-phosphopantetheine moiety from coenzyme A to a Ser of acyl-carrier-protein. This is Holo-[acyl-carrier-protein] synthase from Zymomonas mobilis subsp. mobilis (strain ATCC 31821 / ZM4 / CP4).